Reading from the N-terminus, the 336-residue chain is 4-hydroxy-3-methylbut-2-enyl diphosphate reductase (336 aa).

Residue C21 coordinates [4Fe-4S] cluster. The (2E)-4-hydroxy-3-methylbut-2-enyl diphosphate site is built by H50 and H86. Dimethylallyl diphosphate is bound by residues H50 and H86. Isopentenyl diphosphate is bound by residues H50 and H86. C108 is a [4Fe-4S] cluster binding site. Residue H136 participates in (2E)-4-hydroxy-3-methylbut-2-enyl diphosphate binding. Dimethylallyl diphosphate is bound at residue H136. Residue H136 participates in isopentenyl diphosphate binding. E138 functions as the Proton donor in the catalytic mechanism. T177 contacts (2E)-4-hydroxy-3-methylbut-2-enyl diphosphate. C207 lines the [4Fe-4S] cluster pocket. (2E)-4-hydroxy-3-methylbut-2-enyl diphosphate is bound by residues S235, S236, N237, and S280. 4 residues coordinate dimethylallyl diphosphate: S235, S236, N237, and S280. Positions 235, 236, 237, and 280 each coordinate isopentenyl diphosphate.

Belongs to the IspH family. [4Fe-4S] cluster serves as cofactor.

It carries out the reaction isopentenyl diphosphate + 2 oxidized [2Fe-2S]-[ferredoxin] + H2O = (2E)-4-hydroxy-3-methylbut-2-enyl diphosphate + 2 reduced [2Fe-2S]-[ferredoxin] + 2 H(+). The enzyme catalyses dimethylallyl diphosphate + 2 oxidized [2Fe-2S]-[ferredoxin] + H2O = (2E)-4-hydroxy-3-methylbut-2-enyl diphosphate + 2 reduced [2Fe-2S]-[ferredoxin] + 2 H(+). Its pathway is isoprenoid biosynthesis; dimethylallyl diphosphate biosynthesis; dimethylallyl diphosphate from (2E)-4-hydroxy-3-methylbutenyl diphosphate: step 1/1. It functions in the pathway isoprenoid biosynthesis; isopentenyl diphosphate biosynthesis via DXP pathway; isopentenyl diphosphate from 1-deoxy-D-xylulose 5-phosphate: step 6/6. Its function is as follows. Catalyzes the conversion of 1-hydroxy-2-methyl-2-(E)-butenyl 4-diphosphate (HMBPP) into a mixture of isopentenyl diphosphate (IPP) and dimethylallyl diphosphate (DMAPP). Acts in the terminal step of the DOXP/MEP pathway for isoprenoid precursor biosynthesis. This is 4-hydroxy-3-methylbut-2-enyl diphosphate reductase from Mesorhizobium japonicum (strain LMG 29417 / CECT 9101 / MAFF 303099) (Mesorhizobium loti (strain MAFF 303099)).